The following is a 146-amino-acid chain: MKFSLLSAIAAAVFVPFTSATPLASTADLSYDTHYDDPSLPLSGVTCSDGDNGMITKGYNTAGEIPNYPHVGGAFTVETWNSPNCGKCYKVTYNAKTIFLTAIDHSNSGFNIAKKSMDVLTNGRAEELGRIKVTYEEVASSLCGLK.

A signal peptide spans 1 to 20 (MKFSLLSAIAAAVFVPFTSA).

It belongs to the cerato-platanin family. Post-translationally, glycosylated.

It is found in the secreted. The polypeptide is Heat-stable 19 kDa antigen (CSA) (Coccidioides posadasii (strain C735) (Valley fever fungus)).